The chain runs to 382 residues: Sphingoid long-chain base transporter RSB1 (382 aa).

Topologically, residues 1-34 are extracellular; that stretch reads MSNATNNTLGSLLPQLEAAANSNSLYGGMVPNLR. N-linked (GlcNAc...) asparagine glycans are attached at residues Asn-3 and Asn-6. A helical transmembrane segment spans residues 35–55; the sequence is FNITMIVIWGILLTIHVVQLL. The Cytoplasmic segment spans residues 56–57; the sequence is MR. Residues 58–78 traverse the membrane as a helical segment; sequence QYWFSIAFICTGILEVLGFIG. Over 79-90 the chain is Extracellular; that stretch reads RTWSHSNVADMD. A helical transmembrane segment spans residues 91 to 111; the sequence is AFLLNMICLTIAPVFTMGGIY. The Cytoplasmic segment spans residues 112–135; the sequence is YQLAKLIEVYGHRFSLLPSPMAYS. Residues 136 to 156 traverse the membrane as a helical segment; it reads FIFICSDIVSLVVQAVGGGLC. The Extracellular segment spans residues 157-171; the sequence is GVAVTDGTSTTTGNH. A helical membrane pass occupies residues 172-192; the sequence is VFIAGLAIQVASMAIFLMLWF. The Cytoplasmic segment spans residues 193–241; the sequence is HFLFRIYISVRWEHINSRPISLSLLKISQTEVDYLYREKFHFLRLEPKR. Residues 242-262 form a helical membrane-spanning segment; it reads WVFHYFNLAMTVAVLTIFTRC. Topologically, residues 263 to 281 are extracellular; that stretch reads CYRLAELVVGWDGYLITHE. A helical transmembrane segment spans residues 282–302; sequence WYFIILDALMMAIATVTLTIF. Residues 303–382 are Cytoplasmic-facing; it reads HPGFAFKGRS…LFSSKKKAKL (80 aa).

This sequence belongs to the lipid-translocating exporter (LTE) (TC 9.A.26.1) family.

The protein localises to the cell membrane. Functionally, catalyzes the ATP-dependent translocation of sphingoid long-chain bases (LCBs) from the cytoplasmic site toward the extracytoplasmic side of the membrane (flip-flop). Involved in the establishment of the functional lipid asymmetry of the plasma membrane. Regulates intracellular levels of LCBs, sphingolipid precursors that are growth inhibitory at increased levels. The protein is Sphingoid long-chain base transporter RSB1 (RSB1) of Saccharomyces cerevisiae (strain AWRI1631) (Baker's yeast).